Here is a 170-residue protein sequence, read N- to C-terminus: 3-hydroxyacyl-[acyl-carrier-protein] dehydratase FabZ (170 aa).

Residue histidine 66 is part of the active site.

This sequence belongs to the thioester dehydratase family. FabZ subfamily.

It is found in the cytoplasm. The enzyme catalyses a (3R)-hydroxyacyl-[ACP] = a (2E)-enoyl-[ACP] + H2O. Its function is as follows. Involved in unsaturated fatty acids biosynthesis. Catalyzes the dehydration of short chain beta-hydroxyacyl-ACPs and long chain saturated and unsaturated beta-hydroxyacyl-ACPs. The protein is 3-hydroxyacyl-[acyl-carrier-protein] dehydratase FabZ of Granulibacter bethesdensis (strain ATCC BAA-1260 / CGDNIH1).